A 626-amino-acid polypeptide reads, in one-letter code: Leucine aminopeptidase 2-1 (626 aa).

Substrate contacts are provided by residues 134-136 (QCQ) and 259-264 (PYGGME). His288 is a Zn(2+) binding site. The Proton acceptor role is filled by Glu289. Zn(2+)-binding residues include His292 and Glu311. Tyr389 acts as the Proton donor in catalysis.

This sequence belongs to the peptidase M1 family. Zn(2+) is required as a cofactor.

Its subcellular location is the cytoplasm. It is found in the nucleus. The enzyme catalyses an epoxide + H2O = an ethanediol. In terms of biological role, aminopeptidase that preferentially cleaves di- and tripeptides. Also has low epoxide hydrolase activity (in vitro). Can hydrolyze the epoxide leukotriene LTA(4) but it forms preferentially 5,6-dihydroxy-7,9,11,14-eicosatetraenoic acid rather than the cytokine leukotriene B(4) as the product compared to the homologous mammalian enzyme (in vitro). The sequence is that of Leucine aminopeptidase 2-1 (LKA4) from Scheffersomyces stipitis (strain ATCC 58785 / CBS 6054 / NBRC 10063 / NRRL Y-11545) (Yeast).